The primary structure comprises 110 residues: Flagellar hook-basal body complex protein FliE (110 aa).

The protein belongs to the FliE family.

The protein resides in the bacterial flagellum basal body. This is Flagellar hook-basal body complex protein FliE from Pseudomonas putida (strain GB-1).